Reading from the N-terminus, the 60-residue chain is Myrmicitoxin(1)-Pr4b (60 aa).

A signal peptide spans 1 to 23; the sequence is MKAIIFLFAVLTVVAIIIPIISG. A propeptide spanning residues 24-33 is cleaved from the precursor; it reads EPNAGPHAAS. Position 59 is a glutamine amide (Gln-59).

It belongs to the formicidae venom clade 2 family. Expressed by the venom gland.

It localises to the secreted. Functionally, toxin that causes a rapid and irreversible paralysis when intrathoracically injected into insects (blowflies). Does not cause spontaneous nocifensive behaviors by intraplantar injection in mice. This Pogonomyrmex rugosus (Desert harvester ant) protein is Myrmicitoxin(1)-Pr4b.